The following is a 104-amino-acid chain: Disrupted in renal carcinoma protein 1 (104 aa).

The tract at residues 1–23 (MPEAHMQPAKLQTSLPTTDHGSK) is disordered. Over residues 10–19 (KLQTSLPTTD) the composition is skewed to polar residues.

As to expression, expressed at low steady-state level in adult placenta, testis, ovary, prostate, fetal kidney, spleen and skeletal muscle.

This is Disrupted in renal carcinoma protein 1 (DIRC1) from Homo sapiens (Human).